We begin with the raw amino-acid sequence, 243 residues long: DNA repair protein RecO (243 aa).

Belongs to the RecO family.

Its function is as follows. Involved in DNA repair and RecF pathway recombination. This chain is DNA repair protein RecO, found in Geobacter sulfurreducens (strain ATCC 51573 / DSM 12127 / PCA).